Here is a 784-residue protein sequence, read N- to C-terminus: LPS-assembly protein LptD (784 aa).

The signal sequence occupies residues 1–24 (MKKRIPTLLATMIATALYSQQGLA). 2 disulfides stabilise this stretch: cysteine 31/cysteine 724 and cysteine 173/cysteine 725.

This sequence belongs to the LptD family. As to quaternary structure, component of the lipopolysaccharide transport and assembly complex. Interacts with LptE and LptA. May interact with LptE during assembly of LptD by the beta-barrel assembly machine (BAM). Also interacts with LptM, which promotes the efficient assembly of the LptDE translocon by the BAM complex. Post-translationally, contains two intramolecular disulfide bonds. At least one disulfide bond is required for activity, and protein is probably fully oxidized in vivo.

The protein localises to the cell outer membrane. Functionally, together with LptE, is involved in the assembly of lipopolysaccharide (LPS) at the surface of the outer membrane. Contributes to n-hexane resistance. The protein is LPS-assembly protein LptD of Escherichia coli (strain K12).